A 261-amino-acid chain; its full sequence is Small ribosomal subunit protein eS1 (261 aa).

The span at 1–18 (MAVGKNKRISKGKKGGKK) shows a compositional bias: basic residues. The disordered stretch occupies residues 1–20 (MAVGKNKRISKGKKGGKKKA).

Belongs to the eukaryotic ribosomal protein eS1 family. In terms of assembly, component of the small ribosomal subunit. Mature ribosomes consist of a small (40S) and a large (60S) subunit. The 40S subunit contains about 33 different proteins and 1 molecule of RNA (18S). The 60S subunit contains about 49 different proteins and 3 molecules of RNA (25S, 5.8S and 5S).

The protein localises to the cytoplasm. The sequence is that of Small ribosomal subunit protein eS1 from Catharanthus roseus (Madagascar periwinkle).